Consider the following 501-residue polypeptide: Glutamate--tRNA ligase (501 aa).

The 'HIGH' region motif lies at 11 to 21; the sequence is PSPTGPLHIGG. The 'KMSKS' region signature appears at 260–264; sequence KLSKR. Residue Lys-263 participates in ATP binding.

It belongs to the class-I aminoacyl-tRNA synthetase family. Glutamate--tRNA ligase type 1 subfamily. As to quaternary structure, monomer.

The protein resides in the cytoplasm. It catalyses the reaction tRNA(Glu) + L-glutamate + ATP = L-glutamyl-tRNA(Glu) + AMP + diphosphate. Its function is as follows. Catalyzes the attachment of glutamate to tRNA(Glu) in a two-step reaction: glutamate is first activated by ATP to form Glu-AMP and then transferred to the acceptor end of tRNA(Glu). In Flavobacterium johnsoniae (strain ATCC 17061 / DSM 2064 / JCM 8514 / BCRC 14874 / CCUG 350202 / NBRC 14942 / NCIMB 11054 / UW101) (Cytophaga johnsonae), this protein is Glutamate--tRNA ligase.